Reading from the N-terminus, the 280-residue chain is Shikimate dehydrogenase (NADP(+)) (280 aa).

Residues Ser18–Ser20 and Thr65 contribute to the shikimate site. The active-site Proton acceptor is the Lys69. Shikimate contacts are provided by Asn90 and Asp105. NADP(+)-binding positions include Gly131–Ala135, Asn154–Arg159, and Ile219. Tyr221 provides a ligand contact to shikimate. An NADP(+)-binding site is contributed by Gly242.

The protein belongs to the shikimate dehydrogenase family. As to quaternary structure, homodimer.

It catalyses the reaction shikimate + NADP(+) = 3-dehydroshikimate + NADPH + H(+). It participates in metabolic intermediate biosynthesis; chorismate biosynthesis; chorismate from D-erythrose 4-phosphate and phosphoenolpyruvate: step 4/7. Involved in the biosynthesis of the chorismate, which leads to the biosynthesis of aromatic amino acids. Catalyzes the reversible NADPH linked reduction of 3-dehydroshikimate (DHSA) to yield shikimate (SA). The chain is Shikimate dehydrogenase (NADP(+)) from Methylocella silvestris (strain DSM 15510 / CIP 108128 / LMG 27833 / NCIMB 13906 / BL2).